Here is a 154-residue protein sequence, read N- to C-terminus: Cytochrome c-type biogenesis protein CcmE (154 aa).

Residues 1-7 are Cytoplasmic-facing; that stretch reads MKPRQKR. The helical; Signal-anchor for type II membrane protein transmembrane segment at 8–28 threads the bilayer; that stretch reads LVLIVGIVAAVGVAAALVLNA. Residues 29–154 are Periplasmic-facing; sequence FQSNLVFFYS…GETVVKETRP (126 aa). His-121 and Tyr-125 together coordinate heme. Residues 131-154 form a disordered region; that stretch reads AEALQRAGASNQKLGETVVKETRP.

The protein belongs to the CcmE/CycJ family.

The protein localises to the cell inner membrane. Functionally, heme chaperone required for the biogenesis of c-type cytochromes. Transiently binds heme delivered by CcmC and transfers the heme to apo-cytochromes in a process facilitated by CcmF and CcmH. The protein is Cytochrome c-type biogenesis protein CcmE of Methylibium petroleiphilum (strain ATCC BAA-1232 / LMG 22953 / PM1).